We begin with the raw amino-acid sequence, 296 residues long: Thioredoxin-related transmembrane protein 2 (296 aa).

Residues 1 to 48 (MAVLAPLIALVYSVPRLSRWLARPYYFLSALLSAAFLLVRKLPPVCES) form the signal peptide. The Extracellular portion of the chain corresponds to 49–102 (LPTQREDGNPCDFDWREVEILMFLSAIVMMKNRRSITVEQHVGNIFMFSKVANA). Residues 103-125 (ILFFRLDIRMGLLYITLCIVFLM) form a helical membrane-spanning segment. At 126–296 (TCKPPLYMGP…VPDEESKKDK (171 aa)) the chain is on the cytoplasmic side. The 138-residue stretch at 132-269 (YMGPEYIKYF…LYQRAKKLSK (138 aa)) folds into the Thioredoxin domain. Phosphoserine is present on residues S211 and S243. The interval 272-296 (DKIPEEQPVAAVPAAVPDEESKKDK) is disordered. Positions 277–287 (EQPVAAVPAAV) are enriched in low complexity. Residues 293 to 296 (KKDK) carry the Di-lysine motif motif.

In terms of assembly, monomer. Homodimer; disulfide-linked. Occurs in both reduced and oxidized monomeric form. Oxidative conditions increase homodimerization. Interacts with CANX. Interacts with ATP2A2.

It is found in the endoplasmic reticulum membrane. The protein resides in the mitochondrion membrane. Endoplasmic reticulum and mitochondria-associated protein that probably functions as a regulator of cellular redox state and thereby regulates protein post-translational modification, protein folding and mitochondrial activity. Indirectly regulates neuronal proliferation, migration, and organization in the developing brain. The polypeptide is Thioredoxin-related transmembrane protein 2 (TMX2) (Bos taurus (Bovine)).